A 124-amino-acid chain; its full sequence is U12-barytoxin-Tl1a (124 aa).

An N-terminal signal peptide occupies residues 1–20; the sequence is MKTMIAWLVLLTFAAALCFA. The propeptide occupies 21–78; the sequence is DEGLKQEHMNERKKSRFREDIPDEISEDLLLQEMEAMEAELLEKEMRMEENRNSREKR. 3 disulfide bridges follow: Cys-79-Cys-99, Cys-86-Cys-104, and Cys-98-Cys-118.

It belongs to the neurotoxin 14 (magi-1) family. 04 (ICK-6) subfamily. In terms of tissue distribution, expressed by the venom gland.

It is found in the secreted. Functionally, ion channel inhibitor. In Trittame loki (Brush-footed trapdoor spider), this protein is U12-barytoxin-Tl1a.